We begin with the raw amino-acid sequence, 213 residues long: MTDQKLVTVIDYGMGNLRSVAKAAEHAADSNTRICISDKAEDIRSADAIIFPGQGAAKACMKALNETNITHALIQAATEKPFLGICMGLQVLMTHSQENEGVDCLDILKGDVQKFDLSGHPELKMPHMGWNQIHQTIDHPLWHNIEQNSRFYFVHSYFVSPHDKQIIAGETTHGKRFTSAIAQNNLFAIQAHPEKSADAGLQLFKNFLNWNGQ.

The Glutamine amidotransferase type-1 domain occupies 6–213 (LVTVIDYGMG…FKNFLNWNGQ (208 aa)). Cys86 (nucleophile) is an active-site residue. Residues His192 and Glu194 contribute to the active site.

As to quaternary structure, heterodimer of HisH and HisF.

It localises to the cytoplasm. The catalysed reaction is 5-[(5-phospho-1-deoxy-D-ribulos-1-ylimino)methylamino]-1-(5-phospho-beta-D-ribosyl)imidazole-4-carboxamide + L-glutamine = D-erythro-1-(imidazol-4-yl)glycerol 3-phosphate + 5-amino-1-(5-phospho-beta-D-ribosyl)imidazole-4-carboxamide + L-glutamate + H(+). It carries out the reaction L-glutamine + H2O = L-glutamate + NH4(+). It functions in the pathway amino-acid biosynthesis; L-histidine biosynthesis; L-histidine from 5-phospho-alpha-D-ribose 1-diphosphate: step 5/9. Functionally, IGPS catalyzes the conversion of PRFAR and glutamine to IGP, AICAR and glutamate. The HisH subunit catalyzes the hydrolysis of glutamine to glutamate and ammonia as part of the synthesis of IGP and AICAR. The resulting ammonia molecule is channeled to the active site of HisF. This chain is Imidazole glycerol phosphate synthase subunit HisH, found in Hydrogenovibrio crunogenus (strain DSM 25203 / XCL-2) (Thiomicrospira crunogena).